Reading from the N-terminus, the 206-residue chain is LexA repressor (206 aa).

A DNA-binding region (H-T-H motif) is located at residues 28 to 48 (VREICAAVGLSSTSTVHGHLT). Residues Ser-127 and Lys-165 each act as for autocatalytic cleavage activity in the active site.

This sequence belongs to the peptidase S24 family. In terms of assembly, homodimer.

It carries out the reaction Hydrolysis of Ala-|-Gly bond in repressor LexA.. Represses a number of genes involved in the response to DNA damage (SOS response), including recA and lexA. In the presence of single-stranded DNA, RecA interacts with LexA causing an autocatalytic cleavage which disrupts the DNA-binding part of LexA, leading to derepression of the SOS regulon and eventually DNA repair. This is LexA repressor from Lactobacillus delbrueckii subsp. bulgaricus (strain ATCC 11842 / DSM 20081 / BCRC 10696 / JCM 1002 / NBRC 13953 / NCIMB 11778 / NCTC 12712 / WDCM 00102 / Lb 14).